Here is a 79-residue protein sequence, read N- to C-terminus: MIMHTPIMMTTLISLTLPIFATLTNPYKKRSYPDYVKTTVMYAFITSLPSTTLFILSNQETTIWSWHWMTTQTLDLTLS.

The next 2 membrane-spanning stretches (helical) occupy residues 5–27 (TPIMMTTLISLTLPIFATLTNPY) and 40–57 (VMYAFITSLPSTTLFILS).

This sequence belongs to the complex I subunit 5 family. As to quaternary structure, core subunit of respiratory chain NADH dehydrogenase (Complex I) which is composed of 45 different subunits.

It is found in the mitochondrion inner membrane. The catalysed reaction is a ubiquinone + NADH + 5 H(+)(in) = a ubiquinol + NAD(+) + 4 H(+)(out). Core subunit of the mitochondrial membrane respiratory chain NADH dehydrogenase (Complex I) which catalyzes electron transfer from NADH through the respiratory chain, using ubiquinone as an electron acceptor. Essential for the catalytic activity and assembly of complex I. This is NADH-ubiquinone oxidoreductase chain 5 (MT-ND5) from Macaca fascicularis (Crab-eating macaque).